Consider the following 402-residue polypeptide: NADH-quinone oxidoreductase subunit D (402 aa).

It belongs to the complex I 49 kDa subunit family. As to quaternary structure, NDH-1 is composed of 14 different subunits. Subunits NuoB, C, D, E, F, and G constitute the peripheral sector of the complex.

It localises to the cell inner membrane. It catalyses the reaction a quinone + NADH + 5 H(+)(in) = a quinol + NAD(+) + 4 H(+)(out). In terms of biological role, NDH-1 shuttles electrons from NADH, via FMN and iron-sulfur (Fe-S) centers, to quinones in the respiratory chain. The immediate electron acceptor for the enzyme in this species is believed to be ubiquinone. Couples the redox reaction to proton translocation (for every two electrons transferred, four hydrogen ions are translocated across the cytoplasmic membrane), and thus conserves the redox energy in a proton gradient. In Maricaulis maris (strain MCS10) (Caulobacter maris), this protein is NADH-quinone oxidoreductase subunit D.